The primary structure comprises 245 residues: Ribonuclease PH (245 aa).

Phosphate contacts are provided by residues R86 and 124–126 (GTR).

This sequence belongs to the RNase PH family. As to quaternary structure, homohexameric ring arranged as a trimer of dimers.

It carries out the reaction tRNA(n+1) + phosphate = tRNA(n) + a ribonucleoside 5'-diphosphate. Its function is as follows. Phosphorolytic 3'-5' exoribonuclease that plays an important role in tRNA 3'-end maturation. Removes nucleotide residues following the 3'-CCA terminus of tRNAs; can also add nucleotides to the ends of RNA molecules by using nucleoside diphosphates as substrates, but this may not be physiologically important. Probably plays a role in initiation of 16S rRNA degradation (leading to ribosome degradation) during starvation. The protein is Ribonuclease PH of Bacillus cytotoxicus (strain DSM 22905 / CIP 110041 / 391-98 / NVH 391-98).